We begin with the raw amino-acid sequence, 416 residues long: Neamine transaminase NeoN (416 aa).

The residue at position 231 (lysine 231) is an N6-(pyridoxal phosphate)lysine.

It belongs to the class-III pyridoxal-phosphate-dependent aminotransferase family. Pyridoxal 5'-phosphate serves as cofactor.

The enzyme catalyses neomycin C + 2-oxoglutarate = 6'''-deamino-6'''-oxoneomycin C + L-glutamate. The catalysed reaction is neamine + 2-oxoglutarate = 6'-oxoparomamine + L-glutamate. Its pathway is antibiotic biosynthesis; neomycin biosynthesis. Its function is as follows. 6'-oxoglucosaminyl:L-glutamate aminotransferase that catalyzes pyridoxal-5'-phosphate-mediated transamination for the conversion of paromamine to neamine in the biosynthetic pathway of neomycin. Also able to catalyze deamination at C-6''' of neomycin. The polypeptide is Neamine transaminase NeoN (neoN) (Streptomyces fradiae (Streptomyces roseoflavus)).